Consider the following 337-residue polypeptide: Anthranilate phosphoribosyltransferase (337 aa).

Residues Gly-81, 84-85, Ser-89, 91-94, 109-117, and Ala-121 each bind 5-phospho-alpha-D-ribose 1-diphosphate; these read GD, NVST, and KHGNRAATS. Residue Gly-81 participates in anthranilate binding. Ser-93 contributes to the Mg(2+) binding site. Asn-112 is an anthranilate binding site. Arg-167 provides a ligand contact to anthranilate. Asp-226 and Glu-227 together coordinate Mg(2+).

This sequence belongs to the anthranilate phosphoribosyltransferase family. Homodimer. The cofactor is Mg(2+).

It carries out the reaction N-(5-phospho-beta-D-ribosyl)anthranilate + diphosphate = 5-phospho-alpha-D-ribose 1-diphosphate + anthranilate. It participates in amino-acid biosynthesis; L-tryptophan biosynthesis; L-tryptophan from chorismate: step 2/5. Catalyzes the transfer of the phosphoribosyl group of 5-phosphorylribose-1-pyrophosphate (PRPP) to anthranilate to yield N-(5'-phosphoribosyl)-anthranilate (PRA). This is Anthranilate phosphoribosyltransferase from Methylorubrum extorquens (strain CM4 / NCIMB 13688) (Methylobacterium extorquens).